Consider the following 89-residue polypeptide: Small ribosomal subunit protein uS15 (89 aa).

The protein belongs to the universal ribosomal protein uS15 family. Part of the 30S ribosomal subunit. Forms a bridge to the 50S subunit in the 70S ribosome, contacting the 23S rRNA.

One of the primary rRNA binding proteins, it binds directly to 16S rRNA where it helps nucleate assembly of the platform of the 30S subunit by binding and bridging several RNA helices of the 16S rRNA. In terms of biological role, forms an intersubunit bridge (bridge B4) with the 23S rRNA of the 50S subunit in the ribosome. This Dechloromonas aromatica (strain RCB) protein is Small ribosomal subunit protein uS15.